An 84-amino-acid polypeptide reads, in one-letter code: MPPVVIYTTAWCPYCIRAKQLLQRKGVDFQEIACDGKPELRAELARKAGSTTVPQIWIGETHVGGCDDLHALERAGKLDALLSA.

The 84-residue stretch at 1–84 folds into the Glutaredoxin domain; that stretch reads MPPVVIYTTA…AGKLDALLSA (84 aa). Cysteine 12 and cysteine 15 are joined by a disulfide.

The protein belongs to the glutaredoxin family. In terms of assembly, monomer.

It is found in the cytoplasm. Has a glutathione-disulfide oxidoreductase activity in the presence of NADPH and glutathione reductase. Reduces low molecular weight disulfides and proteins. This Pseudomonas aeruginosa (strain ATCC 15692 / DSM 22644 / CIP 104116 / JCM 14847 / LMG 12228 / 1C / PRS 101 / PAO1) protein is Glutaredoxin (grx).